Here is a 466-residue protein sequence, read N- to C-terminus: Ribulose bisphosphate carboxylase large chain (466 aa).

Lysine 5 is modified (N6,N6,N6-trimethyllysine). Substrate is bound by residues asparagine 114 and threonine 164. The active-site Proton acceptor is the lysine 166. Lysine 168 is a substrate binding site. Residues lysine 192, aspartate 194, and glutamate 195 each coordinate Mg(2+). Lysine 192 carries the post-translational modification N6-carboxylysine. The active-site Proton acceptor is the histidine 285. Residues arginine 286, histidine 318, and serine 370 each coordinate substrate.

It belongs to the RuBisCO large chain family. Type I subfamily. As to quaternary structure, heterohexadecamer of 8 large chains and 8 small chains; disulfide-linked. The disulfide link is formed within the large subunit homodimers. Mg(2+) serves as cofactor. The disulfide bond which can form in the large chain dimeric partners within the hexadecamer appears to be associated with oxidative stress and protein turnover.

Its subcellular location is the plastid. The protein localises to the chloroplast. The enzyme catalyses 2 (2R)-3-phosphoglycerate + 2 H(+) = D-ribulose 1,5-bisphosphate + CO2 + H2O. It catalyses the reaction D-ribulose 1,5-bisphosphate + O2 = 2-phosphoglycolate + (2R)-3-phosphoglycerate + 2 H(+). Functionally, ruBisCO catalyzes two reactions: the carboxylation of D-ribulose 1,5-bisphosphate, the primary event in carbon dioxide fixation, as well as the oxidative fragmentation of the pentose substrate in the photorespiration process. Both reactions occur simultaneously and in competition at the same active site. The polypeptide is Ribulose bisphosphate carboxylase large chain (Moringa oleifera (Horseradish tree)).